Here is a 490-residue protein sequence, read N- to C-terminus: Subtilisin-like protease 8 (490 aa).

Positions 1–26 are cleaved as a signal peptide; that stretch reads MKGLLSLSVLPVLAYASPMIVDSIHQ. A propeptide spanning residues 27–134 is cleaved from the precursor; the sequence is NAAPILSSTN…YIERDSEVHT (108 aa). Positions 43–134 constitute an Inhibitor I9 domain; it reads SYIVVFKKGV…YIERDSEVHT (92 aa). One can recognise a Peptidase S8 domain in the interval 144–450; it reads PWGLARISHR…GGSDDYKKII (307 aa). Active-site charge relay system residues include Asp180 and His212. N-linked (GlcNAc...) asparagine glycosylation occurs at Asn282. Ser378 serves as the catalytic Charge relay system. Asn456 carries an N-linked (GlcNAc...) asparagine glycan.

This sequence belongs to the peptidase S8 family.

The protein resides in the secreted. Its function is as follows. Secreted subtilisin-like serine protease with keratinolytic activity that contributes to pathogenicity. This Trichophyton verrucosum (strain HKI 0517) protein is Subtilisin-like protease 8 (SUB8).